The following is a 684-amino-acid chain: Amino-acid acetyltransferase, mitochondrial (684 aa).

Positions 414-439 are disordered; that stretch reads PQDATNSASEPRDPSQLSTVATRRKR. Polar residues predominate over residues 415–434; the sequence is QDATNSASEPRDPSQLSTVA. One can recognise an N-acetyltransferase domain in the interval 505–674; that stretch reads GKSRMTLNDP…YEGVCRGIEP (170 aa).

Belongs to the acetyltransferase family.

The protein resides in the mitochondrion. The enzyme catalyses L-glutamate + acetyl-CoA = N-acetyl-L-glutamate + CoA + H(+). The protein operates within amino-acid biosynthesis; L-arginine biosynthesis; N(2)-acetyl-L-ornithine from L-glutamate: step 1/4. In terms of biological role, N-acetylglutamate synthase involved in arginine biosynthesis. The sequence is that of Amino-acid acetyltransferase, mitochondrial (ARG2) from Ajellomyces capsulatus (strain NAm1 / WU24) (Darling's disease fungus).